Here is a 346-residue protein sequence, read N- to C-terminus: S-adenosylmethionine:tRNA ribosyltransferase-isomerase (346 aa).

The protein belongs to the QueA family. As to quaternary structure, monomer.

Its subcellular location is the cytoplasm. The enzyme catalyses 7-aminomethyl-7-carbaguanosine(34) in tRNA + S-adenosyl-L-methionine = epoxyqueuosine(34) in tRNA + adenine + L-methionine + 2 H(+). It functions in the pathway tRNA modification; tRNA-queuosine biosynthesis. Transfers and isomerizes the ribose moiety from AdoMet to the 7-aminomethyl group of 7-deazaguanine (preQ1-tRNA) to give epoxyqueuosine (oQ-tRNA). This is S-adenosylmethionine:tRNA ribosyltransferase-isomerase from Chloroherpeton thalassium (strain ATCC 35110 / GB-78).